A 428-amino-acid chain; its full sequence is Trigger factor (428 aa).

The PPIase FKBP-type domain maps to 163-248 (GDTAVIDFEG…IKEIKVKELP (86 aa)).

Belongs to the FKBP-type PPIase family. Tig subfamily.

The protein localises to the cytoplasm. The enzyme catalyses [protein]-peptidylproline (omega=180) = [protein]-peptidylproline (omega=0). In terms of biological role, involved in protein export. Acts as a chaperone by maintaining the newly synthesized protein in an open conformation. Functions as a peptidyl-prolyl cis-trans isomerase. This Ruminiclostridium cellulolyticum (strain ATCC 35319 / DSM 5812 / JCM 6584 / H10) (Clostridium cellulolyticum) protein is Trigger factor.